The sequence spans 299 residues: Ribonuclease H2 subunit A (299 aa).

Methionine 1 carries the post-translational modification N-acetylmethionine. Positions 28-251 (PCVLGVDEAG…AQSILESEAE (224 aa)) constitute an RNase H type-2 domain. Positions 34, 35, and 142 each coordinate a divalent metal cation. Phosphothreonine occurs at positions 205 and 217. The segment at 250-272 (AEDVKWEDSETGDPKGPGKIKSY) is disordered. Position 258 is a phosphoserine (serine 258).

It belongs to the RNase HII family. Eukaryotic subfamily. As to quaternary structure, the RNase H2 complex is a heterotrimer composed of the catalytic subunit RNASEH2A and the non-catalytic subunits RNASEH2B and RNASEH2C. Mn(2+) serves as cofactor. It depends on Mg(2+) as a cofactor.

The protein localises to the nucleus. It carries out the reaction Endonucleolytic cleavage to 5'-phosphomonoester.. In terms of biological role, catalytic subunit of RNase HII, an endonuclease that specifically degrades the RNA of RNA:DNA hybrids. Participates in DNA replication, possibly by mediating the removal of lagging-strand Okazaki fragment RNA primers during DNA replication. Mediates the excision of single ribonucleotides from DNA:RNA duplexes. The sequence is that of Ribonuclease H2 subunit A (RNASEH2A) from Bos taurus (Bovine).